Consider the following 885-residue polypeptide: Translation initiation factor IF-2 (885 aa).

The span at 123 to 232 (ETEAKAKAEA…EAERYSDHHI (110 aa)) shows a compositional bias: basic and acidic residues. The disordered stretch occupies residues 123 to 289 (ETEAKAKAEA…RNRSTAPESM (167 aa)). Residues 253–266 (GRRARNKNTAKTKR) show a composition bias toward basic residues. The segment covering 267–276 (GGKDARDGRE) has biased composition (basic and acidic residues). The tr-type G domain maps to 385–554 (PRAPVVTIMG…LLQAEVLELK (170 aa)). Residues 394-401 (GHVDHGKT) are G1. 394–401 (GHVDHGKT) provides a ligand contact to GTP. The segment at 419-423 (GITQH) is G2. Residues 440-443 (DTPG) are G3. GTP contacts are provided by residues 440-444 (DTPGH) and 494-497 (NKMD). The tract at residues 494-497 (NKMD) is G4. The G5 stretch occupies residues 530 to 532 (SAK).

Belongs to the TRAFAC class translation factor GTPase superfamily. Classic translation factor GTPase family. IF-2 subfamily.

It localises to the cytoplasm. Functionally, one of the essential components for the initiation of protein synthesis. Protects formylmethionyl-tRNA from spontaneous hydrolysis and promotes its binding to the 30S ribosomal subunits. Also involved in the hydrolysis of GTP during the formation of the 70S ribosomal complex. In Shewanella oneidensis (strain ATCC 700550 / JCM 31522 / CIP 106686 / LMG 19005 / NCIMB 14063 / MR-1), this protein is Translation initiation factor IF-2.